The primary structure comprises 443 residues: Glutamyl-tRNA reductase (443 aa).

Substrate contacts are provided by residues 49-52 (TCNR), Ser-109, 114-116 (ETQ), and Gln-120. Cys-50 (nucleophile) is an active-site residue. Residue 189 to 194 (GAGEMS) participates in NADP(+) binding.

It belongs to the glutamyl-tRNA reductase family. Homodimer.

It catalyses the reaction (S)-4-amino-5-oxopentanoate + tRNA(Glu) + NADP(+) = L-glutamyl-tRNA(Glu) + NADPH + H(+). The protein operates within porphyrin-containing compound metabolism; protoporphyrin-IX biosynthesis; 5-aminolevulinate from L-glutamyl-tRNA(Glu): step 1/2. Its function is as follows. Catalyzes the NADPH-dependent reduction of glutamyl-tRNA(Glu) to glutamate 1-semialdehyde (GSA). The chain is Glutamyl-tRNA reductase from Desulfitobacterium hafniense (strain DSM 10664 / DCB-2).